A 547-amino-acid polypeptide reads, in one-letter code: Chaperonin GroEL (547 aa).

ATP-binding positions include 30–33, Lys-51, 87–91, Gly-415, and Asp-496; these read TLGP and DGTTT. The tract at residues 528 to 547 is disordered; sequence DKSDMPAMPPGGMGGMGGMY. Residues 538 to 547 are compositionally biased toward gly residues; that stretch reads GGMGGMGGMY.

The protein belongs to the chaperonin (HSP60) family. Forms a cylinder of 14 subunits composed of two heptameric rings stacked back-to-back. Interacts with the co-chaperonin GroES.

It is found in the cytoplasm. It catalyses the reaction ATP + H2O + a folded polypeptide = ADP + phosphate + an unfolded polypeptide.. Its function is as follows. Together with its co-chaperonin GroES, plays an essential role in assisting protein folding. The GroEL-GroES system forms a nano-cage that allows encapsulation of the non-native substrate proteins and provides a physical environment optimized to promote and accelerate protein folding. This Chlorobium luteolum (strain DSM 273 / BCRC 81028 / 2530) (Pelodictyon luteolum) protein is Chaperonin GroEL.